Here is a 941-residue protein sequence, read N- to C-terminus: Cilia- and flagella-associated protein 69 (941 aa).

Residues 1 to 10 are compositionally biased toward low complexity; it reads MWTEEAAATA. Residues 1 to 23 form a disordered region; sequence MWTEEAAATAEARESGIRNKSSS.

The protein localises to the cell projection. The protein resides in the cilium. It is found in the flagellum. Functionally, cilium- and flagellum-associated protein. In the olfactory epithelium, regulates the speed of activation and termination of the odor response and thus contributes to the robustness of olfactory transduction pathways. Required for sperm flagellum assembly and stability. This is Cilia- and flagella-associated protein 69 from Papio anubis (Olive baboon).